The chain runs to 64 residues: Large ribosomal subunit protein bL35 (64 aa).

2 stretches are compositionally biased toward basic residues: residues 1 to 15 (MPKA…KRFR) and 23 to 33 (VRQKANRRHLL). A disordered region spans residues 1–47 (MPKAKTHSGASKRFRTTGSGKIVRQKANRRHLLEHKPTSRTRRLDGR). Positions 34-46 (EHKPTSRTRRLDG) are enriched in basic and acidic residues.

The protein belongs to the bacterial ribosomal protein bL35 family.

This is Large ribosomal subunit protein bL35 from Mycobacteroides abscessus (strain ATCC 19977 / DSM 44196 / CCUG 20993 / CIP 104536 / JCM 13569 / NCTC 13031 / TMC 1543 / L948) (Mycobacterium abscessus).